The sequence spans 258 residues: UPF0246 protein ETA_07010 (258 aa).

Belongs to the UPF0246 family.

The polypeptide is UPF0246 protein ETA_07010 (Erwinia tasmaniensis (strain DSM 17950 / CFBP 7177 / CIP 109463 / NCPPB 4357 / Et1/99)).